Here is a 234-residue protein sequence, read N- to C-terminus: 1-(5-phosphoribosyl)-5-[(5-phosphoribosylamino)methylideneamino] imidazole-4-carboxamide isomerase (234 aa).

Asp-9 functions as the Proton acceptor in the catalytic mechanism. Residue Asp-131 is the Proton donor of the active site.

The protein belongs to the HisA/HisF family.

The protein resides in the cytoplasm. It carries out the reaction 1-(5-phospho-beta-D-ribosyl)-5-[(5-phospho-beta-D-ribosylamino)methylideneamino]imidazole-4-carboxamide = 5-[(5-phospho-1-deoxy-D-ribulos-1-ylimino)methylamino]-1-(5-phospho-beta-D-ribosyl)imidazole-4-carboxamide. It functions in the pathway amino-acid biosynthesis; L-histidine biosynthesis; L-histidine from 5-phospho-alpha-D-ribose 1-diphosphate: step 4/9. The sequence is that of 1-(5-phosphoribosyl)-5-[(5-phosphoribosylamino)methylideneamino] imidazole-4-carboxamide isomerase from Staphylococcus aureus (strain JH1).